A 461-amino-acid polypeptide reads, in one-letter code: Bifunctional protein GlmU (461 aa).

Residues 1 to 229 (MNKYVVILAA…FSESLGVNDR (229 aa)) are pyrophosphorylase. Residues 8-11 (LAAG), K22, Q72, and 77-78 (GT) contribute to the UDP-N-acetyl-alpha-D-glucosamine site. D102 lines the Mg(2+) pocket. Residues G139, E154, N169, and N227 each coordinate UDP-N-acetyl-alpha-D-glucosamine. N227 contributes to the Mg(2+) binding site. Residues 230 to 250 (IALAQATKIMQRRINEEHMKN) form a linker region. The tract at residues 251 to 461 (GVSFIDPDTA…LPLSKDKEWE (211 aa)) is N-acetyltransferase. 2 residues coordinate UDP-N-acetyl-alpha-D-glucosamine: R332 and K350. H362 functions as the Proton acceptor in the catalytic mechanism. 2 residues coordinate UDP-N-acetyl-alpha-D-glucosamine: Y365 and N376. Acetyl-CoA-binding positions include 385–386 (NY), A422, and R439.

In the N-terminal section; belongs to the N-acetylglucosamine-1-phosphate uridyltransferase family. This sequence in the C-terminal section; belongs to the transferase hexapeptide repeat family. As to quaternary structure, homotrimer. The cofactor is Mg(2+).

Its subcellular location is the cytoplasm. It carries out the reaction alpha-D-glucosamine 1-phosphate + acetyl-CoA = N-acetyl-alpha-D-glucosamine 1-phosphate + CoA + H(+). It catalyses the reaction N-acetyl-alpha-D-glucosamine 1-phosphate + UTP + H(+) = UDP-N-acetyl-alpha-D-glucosamine + diphosphate. It participates in nucleotide-sugar biosynthesis; UDP-N-acetyl-alpha-D-glucosamine biosynthesis; N-acetyl-alpha-D-glucosamine 1-phosphate from alpha-D-glucosamine 6-phosphate (route II): step 2/2. The protein operates within nucleotide-sugar biosynthesis; UDP-N-acetyl-alpha-D-glucosamine biosynthesis; UDP-N-acetyl-alpha-D-glucosamine from N-acetyl-alpha-D-glucosamine 1-phosphate: step 1/1. It functions in the pathway bacterial outer membrane biogenesis; LPS lipid A biosynthesis. Catalyzes the last two sequential reactions in the de novo biosynthetic pathway for UDP-N-acetylglucosamine (UDP-GlcNAc). The C-terminal domain catalyzes the transfer of acetyl group from acetyl coenzyme A to glucosamine-1-phosphate (GlcN-1-P) to produce N-acetylglucosamine-1-phosphate (GlcNAc-1-P), which is converted into UDP-GlcNAc by the transfer of uridine 5-monophosphate (from uridine 5-triphosphate), a reaction catalyzed by the N-terminal domain. The sequence is that of Bifunctional protein GlmU from Lactobacillus gasseri (strain ATCC 33323 / DSM 20243 / BCRC 14619 / CIP 102991 / JCM 1131 / KCTC 3163 / NCIMB 11718 / NCTC 13722 / AM63).